The chain runs to 239 residues: MTAPLSLFVTGTDTEIGKTFVSAAMLHGFARHGLRAAALKPVAAGAYERDGVWRNEDADQLDAAANVVLPPELRTPFLLKAPAAPHIVAAQEGVTLDIDTIVASHREALTRADVVVVEGVGGFRVPLTDTQDTADLAVALGLPVVLVVGVRLGCISHALLTADAITARGLRIAGWVANHVDPAMSYADENVATIRDWLAREHRAPLLGRIAHLRPAIPESAAAMLDIAALVDTLRRAQH.

Position 15-20 (15-20 (EIGKTF)) interacts with ATP. A Mg(2+)-binding site is contributed by Thr19. Residue Lys40 is part of the active site. ATP-binding positions include Asp57, 118 to 121 (EGVG), 178 to 179 (NH), and 211 to 213 (AHL). Residues Asp57 and Glu118 each contribute to the Mg(2+) site.

It belongs to the dethiobiotin synthetase family. In terms of assembly, homodimer. It depends on Mg(2+) as a cofactor.

It localises to the cytoplasm. It carries out the reaction (7R,8S)-7,8-diammoniononanoate + CO2 + ATP = (4R,5S)-dethiobiotin + ADP + phosphate + 3 H(+). Its pathway is cofactor biosynthesis; biotin biosynthesis; biotin from 7,8-diaminononanoate: step 1/2. In terms of biological role, catalyzes a mechanistically unusual reaction, the ATP-dependent insertion of CO2 between the N7 and N8 nitrogen atoms of 7,8-diaminopelargonic acid (DAPA, also called 7,8-diammoniononanoate) to form a ureido ring. The polypeptide is ATP-dependent dethiobiotin synthetase BioD (Burkholderia ambifaria (strain MC40-6)).